The sequence spans 456 residues: Equilibrative nucleoside transporter 2 (456 aa).

Residues 13 to 33 form a helical membrane-spanning segment; that stretch reads LVGISFFILGLGTLLPWNFFI. Asn56 is a glycosylation site (N-linked (GlcNAc...) asparagine). Transmembrane regions (helical) follow at residues 69–89, 98–118, 123–143, 161–181, and 192–212; these read WVTL…SFLY, ILGS…LVKV, GLFF…CAVL, LFLS…LMSL, and LGYF…YLSL. The disordered stretch occupies residues 248–277; the sequence is GVPISPQQASPTLDLDPEKEPEPEEPQKPG. Phosphoserine is present on Ser252. The span at 263-275 shows a compositional bias: basic and acidic residues; sequence DPEKEPEPEEPQK. Transmembrane regions (helical) follow at residues 288-308, 323-343, 360-380, 396-416, and 432-452; these read IWLT…VFPA, WGLF…DWLG, LLPL…LCHV, FITF…LTMC, and ALMT…SFLF.

This sequence belongs to the SLC29A/ENT transporter (TC 2.A.57) family.

The protein localises to the apical cell membrane. The protein resides in the basolateral cell membrane. Its subcellular location is the nucleus membrane. It carries out the reaction inosine(in) = inosine(out). The catalysed reaction is adenosine(in) = adenosine(out). It catalyses the reaction uridine(out) = uridine(in). The enzyme catalyses thymidine(in) = thymidine(out). It carries out the reaction hypoxanthine(out) = hypoxanthine(in). The catalysed reaction is adenine(out) = adenine(in). It catalyses the reaction cytidine(in) = cytidine(out). The enzyme catalyses thymine(out) = thymine(in). It carries out the reaction uracil(in) = uracil(out). The catalysed reaction is guanine(out) = guanine(in). It catalyses the reaction guanosine(in) = guanosine(out). Its function is as follows. Bidirectional uniporter involved in the facilitative transport of nucleosides and nucleobases, and contributes to maintaining their cellular homeostasis. Functions as a Na(+)-independent, passive transporter. Involved in the transport of nucleosides such as inosine, adenosine, uridine, thymidine, cytidine and guanosine. Also able to transport purine nucleobases (hypoxanthine, adenine, guanine) and pyrimidine nucleobases (thymine, uracil). Involved in nucleoside transport at basolateral membrane of kidney cells, allowing liver absorption of nucleoside metabolites. Mediates apical nucleoside uptake into Sertoli cells, thereby regulating the transport of nucleosides in testis across the blood-testis-barrier. Mediates both the influx and efflux of hypoxanthine in skeletal muscle microvascular endothelial cells to control the amount of intracellular hypoxanthine available for xanthine oxidase-mediated ROS production. This Mus musculus (Mouse) protein is Equilibrative nucleoside transporter 2.